The following is a 372-amino-acid chain: Probable leucine aminopeptidase MCYG_08380 (372 aa).

An N-terminal signal peptide occupies residues 1-19; the sequence is MKVSVLAAVAAFAAATAIA. Asn-96 carries N-linked (GlcNAc...) asparagine glycosylation. Residues His-175 and Asp-194 each coordinate Zn(2+). Residues Asn-195 and Asn-219 are each glycosylated (N-linked (GlcNAc...) asparagine). Glu-233 and Asp-260 together coordinate Zn(2+). Cys-305 and Cys-309 form a disulfide bridge. His-338 serves as a coordination point for Zn(2+).

This sequence belongs to the peptidase M28 family. M28E subfamily. In terms of assembly, monomer. Zn(2+) serves as cofactor.

It localises to the secreted. Its function is as follows. Probable extracellular aminopeptidase which contributes to pathogenicity. The sequence is that of Probable leucine aminopeptidase MCYG_08380 from Arthroderma otae (strain ATCC MYA-4605 / CBS 113480) (Microsporum canis).